The sequence spans 115 residues: Dolichyl-diphosphooligosaccharide--protein glycosyltransferase subunit DAD2 (115 aa).

The Cytoplasmic portion of the chain corresponds to 1–31 (MVKSTSKDAQDLFHSLHSAYTATPTNLKIID). A helical membrane pass occupies residues 32–52 (LYVCFAVFTALIQVAYMALVG). The Lumenal segment spans residues 53–55 (SFP). A helical transmembrane segment spans residues 56 to 76 (FNSFLSGVLSCIGTAVLAVCL). Topologically, residues 77 to 94 (RIQVNKENKEFKDLAPER) are cytoplasmic. A helical membrane pass occupies residues 95–115 (AFADFVLCNLVLHLVIINFLG).

This sequence belongs to the DAD/OST2 family. Component of the oligosaccharyltransferase (OST) complex.

The protein localises to the endoplasmic reticulum membrane. The protein operates within protein modification; protein glycosylation. Subunit of the oligosaccharyl transferase (OST) complex that catalyzes the initial transfer of a defined glycan (Glc(3)Man(9)GlcNAc(2) in eukaryotes) from the lipid carrier dolichol-pyrophosphate to an asparagine residue within an Asn-X-Ser/Thr consensus motif in nascent polypeptide chains, the first step in protein N-glycosylation. N-glycosylation occurs cotranslationally and the complex associates with the Sec61 complex at the channel-forming translocon complex that mediates protein translocation across the endoplasmic reticulum (ER). All subunits are required for a maximal enzyme activity. The polypeptide is Dolichyl-diphosphooligosaccharide--protein glycosyltransferase subunit DAD2 (DAD2) (Arabidopsis thaliana (Mouse-ear cress)).